The chain runs to 415 residues: Acetylornithine aminotransferase (415 aa).

Residues 115-116 (GA) and Phe148 contribute to the pyridoxal 5'-phosphate site. Arg151 contributes to the N(2)-acetyl-L-ornithine binding site. 239 to 242 (DEVQ) serves as a coordination point for pyridoxal 5'-phosphate. An N6-(pyridoxal phosphate)lysine modification is found at Lys268. Position 295 (Ser295) interacts with N(2)-acetyl-L-ornithine. Thr296 lines the pyridoxal 5'-phosphate pocket.

It belongs to the class-III pyridoxal-phosphate-dependent aminotransferase family. ArgD subfamily. As to quaternary structure, homodimer. It depends on pyridoxal 5'-phosphate as a cofactor.

The protein localises to the cytoplasm. It catalyses the reaction N(2)-acetyl-L-ornithine + 2-oxoglutarate = N-acetyl-L-glutamate 5-semialdehyde + L-glutamate. It functions in the pathway amino-acid biosynthesis; L-arginine biosynthesis; N(2)-acetyl-L-ornithine from L-glutamate: step 4/4. The sequence is that of Acetylornithine aminotransferase from Prochlorococcus marinus subsp. pastoris (strain CCMP1986 / NIES-2087 / MED4).